A 542-amino-acid chain; its full sequence is Adenine deaminase (542 aa).

Belongs to the metallo-dependent hydrolases superfamily. Adenine deaminase family. Requires Mn(2+) as cofactor.

It catalyses the reaction adenine + H2O + H(+) = hypoxanthine + NH4(+). In Methanosphaera stadtmanae (strain ATCC 43021 / DSM 3091 / JCM 11832 / MCB-3), this protein is Adenine deaminase.